A 229-amino-acid chain; its full sequence is Matrix protein (229 aa).

Positions Q2–L4 match the dynamin binding motif. The short motif at P30–Y33 is the PPXY motif element. Positions P42 to P45 match the PTAP/PSAP motif motif.

It belongs to the vesiculoviruses matrix protein family. In terms of assembly, homomultimer. Interacts with viral nucleocapsid; this interaction contributes to the virion assembly. Interacts with the viral envelope glycoprotein; this interaction contributes to the virion assembly. Interacts with host RAE1-NUP98 complex. Interacts with host NEDD4 and TSG101. Interacts with host dynamin. Interacts with host NDUFAF4; the interaction inhibits viral propagation and is independent of interferon activation. Interacts with host GTF2H5; the interaction may inhibit host transcription. Interacts with host DRG1. Interaction with host CTDNEP1. Interaction with host ABCE1. Post-translationally, phosphorylated by host.

It localises to the virion. The protein resides in the host endomembrane system. The protein localises to the host nucleus membrane. Its subcellular location is the host nucleus. It is found in the host cytoplasm. Forms a double layer around the helical nucleocapsid, the inner matrix layer binding to the N helix and the outer matrix layer binding to the envelope glycoprotein. Plays a major role in assembly and budding of virion, by recruiting cellular partners of the ESCRT complexes that play a key role in releasing the budding particle from the host membrane. Condensates the ribonucleocapsid core during virus assembly. Inhibits the host mRNA nuclear export thereby inducing the shut off of cellular transcription and preventing the interferon signaling and the establishment of antiviral state in infected cells. This shutoff presumably inhibits interferon signaling and thus establishment of antiviral state in virus infected cells. Induces cell-rounding, cytoskeleton disorganization and apoptosis in infected cell. Inhibits host transcription, possibly through interaction with host DNA repair factor IIH/TFIIH GTF2H5 subunit. The sequence is that of Matrix protein (M) from Homo sapiens (Human).